We begin with the raw amino-acid sequence, 173 residues long: Ribulose bisphosphate carboxylase small subunit, chloroplastic 7 (173 aa).

The transit peptide at 1-49 (MASIPATVATVAQANMVAPFTGLKSNAAFPVTKKVNDFSTLASNGGRVQ) directs the protein to the chloroplast.

The protein belongs to the RuBisCO small chain family. Heterohexadecamer of 8 large and 8 small subunits.

The protein resides in the plastid. It is found in the chloroplast. In terms of biological role, ruBisCO catalyzes two reactions: the carboxylation of D-ribulose 1,5-bisphosphate, the primary event in carbon dioxide fixation, as well as the oxidative fragmentation of the pentose substrate. Both reactions occur simultaneously and in competition at the same active site. Although the small subunit is not catalytic it is essential for maximal activity. The protein is Ribulose bisphosphate carboxylase small subunit, chloroplastic 7 of Flaveria pringlei.